The following is a 213-amino-acid chain: tRNA (guanine-N(7)-)-methyltransferase (213 aa).

E44, E69, D96, and D118 together coordinate S-adenosyl-L-methionine. D118 is a catalytic residue. Residue K122 participates in substrate binding. The segment at 124-129 (RHEKRR) is interaction with RNA. Substrate contacts are provided by residues D154 and 191-194 (TEYE).

This sequence belongs to the class I-like SAM-binding methyltransferase superfamily. TrmB family. In terms of assembly, homodimer.

The enzyme catalyses guanosine(46) in tRNA + S-adenosyl-L-methionine = N(7)-methylguanosine(46) in tRNA + S-adenosyl-L-homocysteine. The protein operates within tRNA modification; N(7)-methylguanine-tRNA biosynthesis. Catalyzes the formation of N(7)-methylguanine at position 46 (m7G46) in tRNA. This Bacillus subtilis (strain 168) protein is tRNA (guanine-N(7)-)-methyltransferase.